The following is a 239-amino-acid chain: Nicotinamide riboside transporter PnuC (239 aa).

Over 1–21 (MDFFSTHNILIHIPIGAGGYD) the chain is Cytoplasmic. A helical transmembrane segment spans residues 22-42 (LSWIEAVGTIAGLLCIWLASL). Residues 43–48 (EKISNY) are Periplasmic-facing. The helical transmembrane segment at 49 to 68 (FFGLVNVTLFAIIFFQIQLY) threads the bilayer. The Cytoplasmic portion of the chain corresponds to 69 to 71 (ASL). A helical membrane pass occupies residues 72–89 (LLQLFFFAANIYGWYAWS). Residues 90–109 (RQTKDNQAELKIRWLPLPKA) are Periplasmic-facing. The helical transmembrane segment at 110–127 (MAWLAICVIAIGLMTRYI) threads the bilayer. Residues 128-157 (DPVFAVLTRVAVAIMQMLGLQVTMPVLQPD) are Cytoplasmic-facing. Residues 158 to 177 (AFPFWDSCMMVLSIVAMILM) form a helical membrane-spanning segment. Over 178-183 (TRKYVE) the chain is Periplasmic. A helical membrane pass occupies residues 184 to 206 (NWLLWVIINVISVVIFALQGVYA). Positions 188 and 192 each coordinate beta-nicotinamide D-riboside. Topologically, residues 207 to 239 (MSLEYLILTFIAVNGSRLWINSARERGSRALSR) are cytoplasmic.

The protein belongs to the nicotinamide ribonucleoside (NR) uptake permease (TC 4.B.1) family.

It is found in the cell inner membrane. Its function is as follows. Required for nicotinamide riboside transport across the inner membrane. The protein is Nicotinamide riboside transporter PnuC (pnuC) of Salmonella typhimurium (strain LT2 / SGSC1412 / ATCC 700720).